The sequence spans 1033 residues: PDZ domain-containing protein 7 (1033 aa).

PDZ domains are found at residues 86 to 168 and 210 to 293; these read SVRV…RMGR and IVHL…ETGR. A compositionally biased stretch (low complexity) spans 323–344; sequence ESSSSVSSCASSAPYSSGSLPS. Disordered regions lie at residues 323-380, 444-464, 754-864, and 943-1033; these read ESSS…GGRV, KQQR…LQRS, EPLS…KTVT, and MELV…PRIP. Over residues 770 to 784 the composition is skewed to basic residues; the sequence is AQSRSRSRSRSRSRS. Residues 785-797 are compositionally biased toward low complexity; it reads SRGQGKSPGRRSP. A PDZ 3 domain is found at 862–934; sequence TVTLSKMKQS…QRAVDTIRRA (73 aa). Residues 991–1000 show a composition bias toward pro residues; the sequence is PEPPTNPQTP.

In terms of assembly, homodimerizes (via PDZ2 domain). Component of USH2 complex, composed of ADGRV1, PDZD7, USH2A and WHRN. Interacts (via PDZ domains) with WHRN; the interaction is direct. Interacts with USH1G. Interacts with ADGRV1 (via the cytoplasmic region). Interacts with USH2A (via the cytoplasmic region). Interacts with MYO7A (via MyTH4-FERM domains). As to expression, weakly expressed in the inner ear. Expressed in the retinal pigment epithelium.

It is found in the cell projection. The protein resides in the cilium. It localises to the nucleus. Its subcellular location is the stereocilium. In terms of biological role, in cochlear developing hair cells, essential in organizing the USH2 complex at stereocilia ankle links. Blocks inhibition of adenylate cyclase activity mediated by ADGRV1. The polypeptide is PDZ domain-containing protein 7 (Homo sapiens (Human)).